We begin with the raw amino-acid sequence, 204 residues long: Large ribosomal subunit protein bL25 (204 aa).

Phosphoserine is present on Ser-123.

It belongs to the bacterial ribosomal protein bL25 family. CTC subfamily. Part of the 50S ribosomal subunit; part of the 5S rRNA/L5/L18/L25 subcomplex. Contacts the 5S rRNA. Binds to the 5S rRNA independently of L5 and L18.

This is one of the proteins that binds to the 5S RNA in the ribosome where it forms part of the central protuberance. The sequence is that of Large ribosomal subunit protein bL25 from Pseudomonas aeruginosa (strain UCBPP-PA14).